Here is a 230-residue protein sequence, read N- to C-terminus: RNA-binding protein 24 (230 aa).

Positions 11–88 constitute an RRM domain; the sequence is TKIFVGGLPY…RKANVNLAYL (78 aa).

It is found in the nucleus. The protein localises to the cytoplasm. Multifunctional RNA-binding protein involved in the regulation of pre-mRNA splicing, mRNA stability and mRNA translation important for cell fate decision and differentiation. Plays a major role in pre-mRNA alternative splicing regulation. Mediates preferentially muscle-specific exon inclusion in numerous mRNAs important for striated cardiac and skeletal muscle cell differentiation. Binds to intronic splicing enhancer (ISE) composed of stretches of GU-rich motifs localized in flanking intron of exon that will be included by alternative splicing. Involved in embryonic stem cell (ESC) transition to cardiac cell differentiation by promoting pre-mRNA alternative splicing events of several pluripotency and/or differentiation genes. Plays a role in the regulation of mRNA stability and mRNA translation to which it is bound. Involved in myogenic differentiation by regulating myog levels. Binds to a huge amount of mRNAs. Required for embryonic heart development, sarcomer and M-band formation in striated muscles. This Danio rerio (Zebrafish) protein is RNA-binding protein 24 (rbm24).